The following is a 192-amino-acid chain: MSKPNVAIIVAALKPALGIGYKGKMPWRLRKEIRYFKDVTTRTTKPNTRNAVIMGRKTWESIPQKFRPLPDRLNIILSRSYENKIIDDNIIHASSIESSLNLVSDVERVFIIGGAEIYNELINNSLVSHLLITEIEHPSPESIEMDTFLKFPLESWTKQPKSELQKFVGDTVLEDDIKEGDFTYNYTLWTRK.

In terms of domain architecture, DHFR spans 5 to 191; it reads NVAIIVAALK…FTYNYTLWTR (187 aa). NADP(+)-binding positions include A11 and 18–24; that span reads GIGYKGK. 32–37 lines the substrate pocket; that stretch reads EIRYFK. 56–58 provides a ligand contact to NADP(+); sequence RKT. R72 is a substrate binding site. Residue 78 to 80 participates in NADP(+) binding; sequence SRS. Substrate is bound by residues I112 and Y118. 113 to 120 contacts NADP(+); the sequence is GGAEIYNE.

This sequence belongs to the dihydrofolate reductase family.

It carries out the reaction (6S)-5,6,7,8-tetrahydrofolate + NADP(+) = 7,8-dihydrofolate + NADPH + H(+). Its pathway is cofactor biosynthesis; tetrahydrofolate biosynthesis; 5,6,7,8-tetrahydrofolate from 7,8-dihydrofolate: step 1/1. In terms of biological role, key enzyme in folate metabolism. Catalyzes an essential reaction for de novo glycine and purine synthesis, and for DNA precursor synthesis. The sequence is that of Dihydrofolate reductase (DFR1) from Candida albicans (Yeast).